Reading from the N-terminus, the 462-residue chain is S-alkyl-thiohydroximate lyase SUR1 (462 aa).

This sequence belongs to the class-I pyridoxal-phosphate-dependent aminotransferase family. It depends on pyridoxal 5'-phosphate as a cofactor.

Its function is as follows. C-S lyase involved in glucosinolate biosynthesis. Converts S-(alkylacetohydroximoyl)-L-cysteine to thiohydroximate. Functions in auxin homeostasis. Probably required for glucosinolate activation in response to pathogens. The sequence is that of S-alkyl-thiohydroximate lyase SUR1 (SUR1) from Arabidopsis thaliana (Mouse-ear cress).